A 143-amino-acid chain; its full sequence is ATP synthase F(0) complex subunit C2, mitochondrial (143 aa).

The transit peptide at 1-68 directs the protein to the mitochondrion; that stretch reads MYTCAKFVST…RSFQTSAISR (68 aa). Residues 84-104 form a helical membrane-spanning segment; it reads VGVAGSGAGIGTVFGSLIIGY. Position 111 is an N6,N6,N6-trimethyllysine (Lys-111). Residues 119–139 form a helical membrane-spanning segment; the sequence is ILGFALSEAMGLFCLMVAFLI.

The protein belongs to the ATPase C chain family. F-type ATPases have 2 components, CF(1) - the catalytic core - and CF(0) - the membrane proton channel. CF(1) has five subunits: alpha(3), beta(3), gamma(1), delta(1), epsilon(1). CF(0) has three main subunits: a, b and c. Interacts with DNAJC30; interaction is direct. Post-translationally, trimethylated by ATPSCKMT at Lys-111. Methylation is required for proper incorporation of the C subunit into the ATP synthase complex and mitochondrial respiration.

Its subcellular location is the mitochondrion membrane. Its function is as follows. Mitochondrial membrane ATP synthase (F(1)F(0) ATP synthase or Complex V) produces ATP from ADP in the presence of a proton gradient across the membrane which is generated by electron transport complexes of the respiratory chain. F-type ATPases consist of two structural domains, F(1) - containing the extramembraneous catalytic core and F(0) - containing the membrane proton channel, linked together by a central stalk and a peripheral stalk. During catalysis, ATP synthesis in the catalytic domain of F(1) is coupled via a rotary mechanism of the central stalk subunits to proton translocation. Part of the complex F(0) domain. A homomeric c-ring of probably 10 subunits is part of the complex rotary element. This chain is ATP synthase F(0) complex subunit C2, mitochondrial, found in Ovis aries (Sheep).